Here is a 166-residue protein sequence, read N- to C-terminus: Small ribosomal subunit protein uS5 (166 aa).

Residues 11-74 (LQEKLIAVNR…EKARRNMKTV (64 aa)) form the S5 DRBM domain.

The protein belongs to the universal ribosomal protein uS5 family. As to quaternary structure, part of the 30S ribosomal subunit. Contacts proteins S4 and S8.

With S4 and S12 plays an important role in translational accuracy. Functionally, located at the back of the 30S subunit body where it stabilizes the conformation of the head with respect to the body. This chain is Small ribosomal subunit protein uS5, found in Photorhabdus laumondii subsp. laumondii (strain DSM 15139 / CIP 105565 / TT01) (Photorhabdus luminescens subsp. laumondii).